The following is a 366-amino-acid chain: Nitronate monooxygenase (366 aa).

Residues Asn-74, Gln-181, Gly-186, Gly-223, and 242-245 (QLGT) contribute to the FMN site.

Belongs to the nitronate monooxygenase family. NMO class I subfamily. The cofactor is FMN.

The catalysed reaction is 3 propionate 3-nitronate + 3 O2 + H2O = 3 3-oxopropanoate + 2 nitrate + nitrite + H2O2 + 3 H(+). In terms of biological role, nitronate monooxygenase that uses molecular oxygen to catalyze the oxidative denitrification of alkyl nitronates. Acts on propionate 3-nitronate (P3N), the presumed physiological substrate. Is likely involved in the degradation of P3N, that allows B.phytofirmans PsJN to grow on 3-nitropropionate/P3N as the sole source of nitrogen and carbon. Also probably functions in the detoxification of P3N, a metabolic poison produced by plants and fungi as a defense mechanism. Cannot oxidize nitroalkanes such as 3-nitropropionate, nitroethane, or 1-nitropropane. This chain is Nitronate monooxygenase, found in Paraburkholderia phytofirmans (strain DSM 17436 / LMG 22146 / PsJN) (Burkholderia phytofirmans).